The following is a 426-amino-acid chain: MSTEAPVLGILCGGGPAPGLNGVIAGATLYALRLGWKVIGFMEGFKYLCTGDIETVKAHTIDLTYDIVSRIHFQGGTIIQTSRANPRKSTELQENVRKCLRALKVRYFLTIGGDDTASSAVSVAQGMDGNEISVISCPKTIDNDLPLPADQSTFGFHTARSLGMEIIRNLMVDSKSAPRWFLVEAMGRSAGHLALGMAEASGAHLCLIPEEFKQDEIEFEDVVELVEATILKRLAYGKNYGVCVLAEGLVSKMSKKALYRLFGNREPPTDPHGHILLDDAELARSLSEELLKRLGNLGIRITPKKIGYELRCADPVAFDAVYTRELGYGAIDAFLNGHSAALIVRENGQVKPVQFKDLLDPATGRVRTRLVDVTSQSFKVARVYMWRMSKKDYENKDLVARVAAAGKMTPEAFTEKFAHLTDVVIE.

Diphosphate is bound at residue Gly-15. Asp-114 lines the Mg(2+) pocket. Substrate is bound by residues 140–142 (TID), 186–188 (MGR), Glu-247, and 308–311 (YELR). Catalysis depends on Asp-142, which acts as the Proton acceptor.

Belongs to the phosphofructokinase type A (PFKA) family. PPi-dependent PFK group II subfamily. Clade 'Short' sub-subfamily. Homotetramer. Mg(2+) serves as cofactor.

The protein localises to the cytoplasm. It catalyses the reaction beta-D-fructose 6-phosphate + diphosphate = beta-D-fructose 1,6-bisphosphate + phosphate + H(+). It functions in the pathway carbohydrate degradation; glycolysis; D-glyceraldehyde 3-phosphate and glycerone phosphate from D-glucose: step 3/4. With respect to regulation, non-allosteric. Functionally, catalyzes the phosphorylation of D-fructose 6-phosphate, the first committing step of glycolysis. Uses inorganic phosphate (PPi) as phosphoryl donor instead of ATP like common ATP-dependent phosphofructokinases (ATP-PFKs), which renders the reaction reversible, and can thus function both in glycolysis and gluconeogenesis. Consistently, PPi-PFK can replace the enzymes of both the forward (ATP-PFK) and reverse (fructose-bisphosphatase (FBPase)) reactions. In Trichomonas vaginalis (strain ATCC PRA-98 / G3), this protein is Pyrophosphate--fructose 6-phosphate 1-phosphotransferase 2 (pfk2).